A 156-amino-acid polypeptide reads, in one-letter code: RNA pyrophosphohydrolase (156 aa).

The Nudix hydrolase domain occupies Asn-6–Lys-148. A Nudix box motif is present at residues Gly-43–Gly-64.

The protein belongs to the Nudix hydrolase family. RppH subfamily. A divalent metal cation serves as cofactor.

Its function is as follows. Accelerates the degradation of transcripts by removing pyrophosphate from the 5'-end of triphosphorylated RNA, leading to a more labile monophosphorylated state that can stimulate subsequent ribonuclease cleavage. The polypeptide is RNA pyrophosphohydrolase (Campylobacter jejuni subsp. jejuni serotype O:6 (strain 81116 / NCTC 11828)).